We begin with the raw amino-acid sequence, 105 residues long: Cell division protein FtsB (105 aa).

At 1 to 3 (MRL) the chain is on the cytoplasmic side. Residues 4–21 (FTLILMVVLALVQRQLWF) form a helical membrane-spanning segment. At 22-105 (GKNGLVEYRQ…NKQSSLPKSD (84 aa)) the chain is on the periplasmic side. Positions 28 to 74 (EYRQVSENLLRRQADNQKLQERNMLLKEDIEDLKSGLEAIEELARND) form a coiled coil.

This sequence belongs to the FtsB family. As to quaternary structure, part of a complex composed of FtsB, FtsL and FtsQ.

The protein localises to the cell inner membrane. Functionally, essential cell division protein. May link together the upstream cell division proteins, which are predominantly cytoplasmic, with the downstream cell division proteins, which are predominantly periplasmic. This chain is Cell division protein FtsB, found in Tolumonas auensis (strain DSM 9187 / NBRC 110442 / TA 4).